The primary structure comprises 185 residues: DNA-directed RNA polymerase 21 kDa subunit (185 aa).

This sequence belongs to the poxviridae DNA-directed RNA polymerase 22 kDa subunit family. The DNA-dependent RNA polymerase used for intermediate and late genes expression consists of eight subunits Rpo30/OPG66, Rpo7/OPG90, Rpo22/OPG103, Rpo147/OPG105, Rpo18/OPG119, Rpo19/OPG131, Rpo132/OPG151 and Rpo35/OPG156. The same holoenzyme, with the addition of the transcription-specificity factor OPG109, is used for early gene expression.

It is found in the virion. The catalysed reaction is RNA(n) + a ribonucleoside 5'-triphosphate = RNA(n+1) + diphosphate. Functionally, part of the DNA-dependent RNA polymerase which catalyzes the transcription of viral DNA into RNA using the four ribonucleoside triphosphates as substrates. Responsible for the transcription of early, intermediate and late genes. DNA-dependent RNA polymerase associates with the early transcription factor (ETF), itself composed of OPG118 and OPG133, thereby allowing the early genes transcription. Late transcription, and probably also intermediate transcription, require newly synthesized RNA polymerase. In Oryctolagus cuniculus (Rabbit), this protein is DNA-directed RNA polymerase 21 kDa subunit (OPG103).